Consider the following 262-residue polypeptide: Adenosylcobinamide-GDP ribazoletransferase (262 aa).

Helical transmembrane passes span 41–63, 68–85, 115–134, 141–163, and 201–221; these read AFPFAGLAIALPSAAVAMALMAL, LFAAFVVVAIQALVTGAL, IGTYAAVALILSFGLRVSAF, FSPLGAAMAILGAACLSRAAMVW, and LLFYLAQVPALGVIAALVAFL.

The protein belongs to the CobS family. In terms of assembly, associated with a large complex of proteins. Mg(2+) is required as a cofactor.

Its subcellular location is the cell inner membrane. It catalyses the reaction alpha-ribazole + adenosylcob(III)inamide-GDP = adenosylcob(III)alamin + GMP + H(+). The catalysed reaction is alpha-ribazole 5'-phosphate + adenosylcob(III)inamide-GDP = adenosylcob(III)alamin 5'-phosphate + GMP + H(+). It participates in cofactor biosynthesis; adenosylcobalamin biosynthesis; adenosylcobalamin from cob(II)yrinate a,c-diamide: step 7/7. Joins adenosylcobinamide-GDP and alpha-ribazole to generate adenosylcobalamin (Ado-cobalamin). Also synthesizes adenosylcobalamin 5'-phosphate from adenosylcobinamide-GDP and alpha-ribazole 5'-phosphate. The protein is Adenosylcobinamide-GDP ribazoletransferase (cobV) of Sinorhizobium sp.